The sequence spans 326 residues: Small ribosomal subunit biogenesis GTPase RsgA (326 aa).

Residues 80-241 (LSHQMHIIAS…IIDTPGIKGF (162 aa)) enclose the CP-type G domain. GTP-binding positions include 129 to 132 (NKID) and 183 to 191 (GHSGVGKST). Residues Cys265, Cys270, His272, and Cys278 each coordinate Zn(2+).

This sequence belongs to the TRAFAC class YlqF/YawG GTPase family. RsgA subfamily. As to quaternary structure, monomer. Associates with 30S ribosomal subunit, binds 16S rRNA. Zn(2+) serves as cofactor.

The protein resides in the cytoplasm. Functionally, one of several proteins that assist in the late maturation steps of the functional core of the 30S ribosomal subunit. Helps release RbfA from mature subunits. May play a role in the assembly of ribosomal proteins into the subunit. Circularly permuted GTPase that catalyzes slow GTP hydrolysis, GTPase activity is stimulated by the 30S ribosomal subunit. The polypeptide is Small ribosomal subunit biogenesis GTPase RsgA (Flavobacterium psychrophilum (strain ATCC 49511 / DSM 21280 / CIP 103535 / JIP02/86)).